A 507-amino-acid chain; its full sequence is Carnosic acid synthase (507 aa).

The chain crosses the membrane as a helical span at residues V6 to W23. Residue C450 coordinates heme.

The protein belongs to the cytochrome P450 family. Requires heme as cofactor. In terms of tissue distribution, expressed in glandular trichomes of young leaves.

It localises to the membrane. It carries out the reaction 11-hydroxyferruginol + 3 reduced [NADPH--hemoprotein reductase] + 3 O2 = carnosate + 3 oxidized [NADPH--hemoprotein reductase] + 4 H2O + 4 H(+). The enzyme catalyses miltiradiene + 2 reduced [NADPH--hemoprotein reductase] + 2 O2 = miltiradien-20-al + 2 oxidized [NADPH--hemoprotein reductase] + 3 H2O + 2 H(+). It catalyses the reaction ferruginol + 3 reduced [NADPH--hemoprotein reductase] + 3 O2 = pisiferate + 3 oxidized [NADPH--hemoprotein reductase] + 4 H2O + 4 H(+). It participates in secondary metabolite biosynthesis; terpenoid biosynthesis. In terms of biological role, monooxygenase involved in the biosynthesis of carnosate, a potent antioxidant labdane-related diterpene natural product. Catalyzes the oxidation of 11-hydroxyferruginol to produce carnosate. Mediates the conversion of miltiradien into miltiradien-20-al. Also involved in the production of pisiferic acid and derivative products from ferruginol. This Rosmarinus officinalis (Rosemary) protein is Carnosic acid synthase.